The primary structure comprises 463 residues: L-seryl-tRNA(Sec) selenium transferase (463 aa).

N6-(pyridoxal phosphate)lysine is present on Lys294.

This sequence belongs to the SelA family. Requires pyridoxal 5'-phosphate as cofactor.

The protein resides in the cytoplasm. It carries out the reaction L-seryl-tRNA(Sec) + selenophosphate + H(+) = L-selenocysteinyl-tRNA(Sec) + phosphate. It participates in aminoacyl-tRNA biosynthesis; selenocysteinyl-tRNA(Sec) biosynthesis; selenocysteinyl-tRNA(Sec) from L-seryl-tRNA(Sec) (bacterial route): step 1/1. In terms of biological role, converts seryl-tRNA(Sec) to selenocysteinyl-tRNA(Sec) required for selenoprotein biosynthesis. In Hyphomonas neptunium (strain ATCC 15444), this protein is L-seryl-tRNA(Sec) selenium transferase.